A 370-amino-acid chain; its full sequence is Probable endopolygalacturonase A (370 aa).

The first 19 residues, 1 to 19, serve as a signal peptide directing secretion; that stretch reads MPSAKPLFCLATLAGAALA. A propeptide spanning residues 20–32 is cleaved from the precursor; sequence APAPSRATDFNKR. A disulfide bridge connects residues Cys35 and Cys50. PbH1 repeat units follow at residues 162-192, 193-214, 215-235, 244-265, 273-295, and 307-352; these read SDNL…DISE, STYI…AINS, GENI…SIGS, VKNV…RIKT, VEDI…VIEQ, and SNGV…DITG. Residue Asp207 is the Proton donor of the active site. Cys209 and Cys225 are oxidised to a cystine. His229 is a catalytic residue. Residue Asn246 is glycosylated (N-linked (GlcNAc...) asparagine). Cystine bridges form between Cys335/Cys340 and Cys359/Cys368.

The protein belongs to the glycosyl hydrolase 28 family.

The protein localises to the secreted. It carries out the reaction (1,4-alpha-D-galacturonosyl)n+m + H2O = (1,4-alpha-D-galacturonosyl)n + (1,4-alpha-D-galacturonosyl)m.. Involved in maceration and soft-rotting of plant tissue. Hydrolyzes the 1,4-alpha glycosidic bonds of de-esterified pectate in the smooth region of the plant cell wall. The polypeptide is Probable endopolygalacturonase A (pgaA) (Aspergillus kawachii (strain NBRC 4308) (White koji mold)).